A 1190-amino-acid chain; its full sequence is DNA-directed RNA polymerase subunit beta (1190 aa).

The disordered stretch occupies residues 1155–1190 (ENFDDDDDHAPDAIMVDVKPAEREEAGEEKDAVTKE). Over residues 1173-1190 (KPAEREEAGEEKDAVTKE) the composition is skewed to basic and acidic residues.

Belongs to the RNA polymerase beta chain family. As to quaternary structure, the RNAP catalytic core consists of 2 alpha, 1 beta, 1 beta' and 1 omega subunit. When a sigma factor is associated with the core the holoenzyme is formed, which can initiate transcription.

The catalysed reaction is RNA(n) + a ribonucleoside 5'-triphosphate = RNA(n+1) + diphosphate. In terms of biological role, DNA-dependent RNA polymerase catalyzes the transcription of DNA into RNA using the four ribonucleoside triphosphates as substrates. The chain is DNA-directed RNA polymerase subunit beta from Geobacillus kaustophilus (strain HTA426).